We begin with the raw amino-acid sequence, 154 residues long: MKTFSAKPAEVTKKWIVIDATGLVVGRLATLVANRLRGKHLPTYTPHVDCGDHVIIVNAAKVVLTGRKRENKVYYHHTGFIGGIKERTAKSILEGRFPERVVEKAIERMIPRGPLGRMQMGNLRVYGGPDHPHEAQQPEPLNVAVMNRKNMRAA.

Belongs to the universal ribosomal protein uL13 family. In terms of assembly, part of the 50S ribosomal subunit.

This protein is one of the early assembly proteins of the 50S ribosomal subunit, although it is not seen to bind rRNA by itself. It is important during the early stages of 50S assembly. The polypeptide is Large ribosomal subunit protein uL13 (Rhodopseudomonas palustris (strain BisB18)).